Consider the following 881-residue polypeptide: MASPRTPVSPPELPEKNFQYRQVQYWDQRYKDAADSGPYEWFGDFASFRALLEPELCPEDRILVLGCGNSALSYELFLGGFPNVTSVDYSPVVVAAMQVRYAHVPSLRWETMDVRALDFPSGSFDVVLEKGTLDAMLAGEPDPWNVSSEGVHTVDQVLSEVGFQKRTRQLFGSHTQLELVLAGLILVLAALLLGCLVALWVHRDPAHSTCVTEACIRVAGKILESLDRGVSPCQDFYQFSCGGWIRRNPLPNGRSRWNTFNSLWDQNQAILKHLLENTTFNSSSEAERKTRSFYLSCLQSERIEKLGAKPLRDLIDKIGGWNITGPWDEDSFMDVLKAVAGTYRATPFFTVYVSADSKSSNSNIIQVDQSGLFLPSRDYYLNRTANEKVLTAYLDYMVELGVLLGGQPTSTREQMQQVLELEIQLANITVPQDQRRDEEKIYHKMSISELQALAPAVDWLEFLSFLLSPLELGDSEPVVVYGTEYLQQVSELINRTEPSILNNYLIWNLVQKTTSSLDQRFETAQEKLLETLYGTKKSCTPRWQTCISNTDDALGFALGSLFVKATFDRQSKEIAEGMINEIRSAFEETLGDLVWMDEKTRLAAKEKADAIYDMIGFPDFILEPKELDDVYDGYEVSEDSFFQNMLNLYNFSAKVMADQLRKPPSRDQWSMTPQTVNAYYLPTKNEIVFPAGILQAPFYAHNHPKALNFGGIGVVMGHELTHAFDDQGREYDKEGNLRPWWQNESLTAFQNHTACMEEQYSQYQVNGERLNGLQTLGENIADNGGLKAAYNAYKAWLRKHGEEQPLPAVGLTNHQLFFVGFAQVWCSVRTPESSHEGLVTDPHSPARFRVLGTLSNSRDFLRHFGCPVGSPMNPGQLCEVW.

The methyltransferase-like region stretch occupies residues 1-160 (MASPRTPVSP…VHTVDQVLSE (160 aa)). Residues 1 to 178 (MASPRTPVSP…QLFGSHTQLE (178 aa)) are Cytoplasmic-facing. The S-adenosyl-L-methionine site is built by Trp26 and Tyr30. The residue at position 39 (Tyr39) is a Phosphotyrosine. S-adenosyl-L-methionine contacts are provided by residues Trp41, Gly66, 88–89 (DY), 113–114 (DV), and Lys130. His174 is subject to Phosphoserine. The helical; Signal-anchor for type II membrane protein transmembrane segment at 179-199 (LVLAGLILVLAALLLGCLVAL) threads the bilayer. The Lumenal portion of the chain corresponds to 200–881 (WVHRDPAHST…MNPGQLCEVW (682 aa)). In terms of domain architecture, Peptidase M13 spans 209–881 (TCVTEACIRV…MNPGQLCEVW (673 aa)). Disulfide bonds link Cys210-Cys215, Cys233-Cys866, Cys241-Cys826, Cys297-Cys546, and Cys755-Cys878. N-linked (GlcNAc...) asparagine glycosylation is found at Asn277, Asn281, Asn322, Asn382, Asn427, Asn494, and Asn650. His718 serves as a coordination point for Zn(2+). Residue Glu719 is part of the active site. His722 is a binding site for Zn(2+). N-linked (GlcNAc...) asparagine glycosylation is found at Asn743 and Asn751. Glu778 lines the Zn(2+) pocket. Asp782 (proton donor) is an active-site residue.

In the N-terminal section; belongs to the methyltransferase superfamily. This sequence in the C-terminal section; belongs to the peptidase M13 family. It depends on Zn(2+) as a cofactor. Expressed at high levels in central nervous system. Expressed in adrenal glands, ovary and uterus, and at low levels in heart.

The protein localises to the golgi apparatus membrane. It localises to the cytoplasmic vesicle. The protein resides in the secretory vesicle membrane. It carries out the reaction Hydrolysis of the 21-Trp-|-Val-22 bond in big endothelin to form endothelin 1.. Its activity is regulated as follows. Inhibited by phosphoramidon. In terms of biological role, converts big endothelin-1 to endothelin-1. May also have methyltransferase activity. May play a role in amyloid-beta processing. The protein is EEF1AKMT4-ECE2 readthrough transcript protein of Mus musculus (Mouse).